A 450-amino-acid polypeptide reads, in one-letter code: Hyaluronidase-1 (450 aa).

An N-terminal signal peptide occupies residues 1–35 (MRPFSLEVSLHLPWAMAAHLLPVCTLFLNLLSMTQ). Cystine bridges form between Cys-58-Cys-348 and Cys-222-Cys-236. N-linked (GlcNAc...) asparagine glycosylation occurs at Asn-85. The active-site Proton donor is Glu-146. Asn-231 and Asn-365 each carry an N-linked (GlcNAc...) asparagine glycan. 3 cysteine pairs are disulfide-bonded: Cys-373–Cys-384, Cys-378–Cys-433, and Cys-435–Cys-444. N-linked (GlcNAc...) asparagine glycosylation is present at Asn-398. Residues 433-444 (CRCYRGWRGTRC) enclose the EGF-like domain.

The protein belongs to the glycosyl hydrolase 56 family.

The protein resides in the secreted. It localises to the lysosome. The catalysed reaction is Random hydrolysis of (1-&gt;4)-linkages between N-acetyl-beta-D-glucosamine and D-glucuronate residues in hyaluronate.. May have a role in promoting tumor progression. May block the TGFB1-enhanced cell growth. The chain is Hyaluronidase-1 (HYAL1) from Bos taurus (Bovine).